A 463-amino-acid polypeptide reads, in one-letter code: Membrane-bound lytic murein transglycosylase F (463 aa).

The first 33 residues, 1 to 33 (MQSQDYKKRLKLQIIIILSIAVMSCGVPNVPTA), serve as a signal peptide directing secretion. The segment at 34–272 (LSSLLERESI…VLEDKYFGHI (239 aa)) is non-LT domain. Residues 273–463 (RQFDYVDSRA…LVWLDEQGKI (191 aa)) form an LT domain region. Residue glutamate 317 is part of the active site.

In the N-terminal section; belongs to the bacterial solute-binding protein 3 family. It in the C-terminal section; belongs to the transglycosylase Slt family.

Its subcellular location is the cell outer membrane. The enzyme catalyses Exolytic cleavage of the (1-&gt;4)-beta-glycosidic linkage between N-acetylmuramic acid (MurNAc) and N-acetylglucosamine (GlcNAc) residues in peptidoglycan, from either the reducing or the non-reducing ends of the peptidoglycan chains, with concomitant formation of a 1,6-anhydrobond in the MurNAc residue.. Its function is as follows. Murein-degrading enzyme that degrades murein glycan strands and insoluble, high-molecular weight murein sacculi, with the concomitant formation of a 1,6-anhydromuramoyl product. Lytic transglycosylases (LTs) play an integral role in the metabolism of the peptidoglycan (PG) sacculus. Their lytic action creates space within the PG sacculus to allow for its expansion as well as for the insertion of various structures such as secretion systems and flagella. In Alteromonas mediterranea (strain DSM 17117 / CIP 110805 / LMG 28347 / Deep ecotype), this protein is Membrane-bound lytic murein transglycosylase F.